We begin with the raw amino-acid sequence, 352 residues long: S-adenosylmethionine:tRNA ribosyltransferase-isomerase (352 aa).

This sequence belongs to the QueA family. Monomer.

It is found in the cytoplasm. The catalysed reaction is 7-aminomethyl-7-carbaguanosine(34) in tRNA + S-adenosyl-L-methionine = epoxyqueuosine(34) in tRNA + adenine + L-methionine + 2 H(+). It participates in tRNA modification; tRNA-queuosine biosynthesis. Transfers and isomerizes the ribose moiety from AdoMet to the 7-aminomethyl group of 7-deazaguanine (preQ1-tRNA) to give epoxyqueuosine (oQ-tRNA). The polypeptide is S-adenosylmethionine:tRNA ribosyltransferase-isomerase (Bacteroides fragilis (strain ATCC 25285 / DSM 2151 / CCUG 4856 / JCM 11019 / LMG 10263 / NCTC 9343 / Onslow / VPI 2553 / EN-2)).